Here is a 312-residue protein sequence, read N- to C-terminus: TATA box-binding protein-like 2 (312 aa).

The interval 65 to 115 is disordered; it reads DELSTQDEPSQVEKESKNEDSGIYTDCPQKESTQADIDTSNSAQNTSQFNL. A compositionally biased stretch (basic and acidic residues) spans 75–84; sequence QVEKESKNED. The span at 94–115 shows a compositional bias: polar residues; sequence KESTQADIDTSNSAQNTSQFNL.

Belongs to the TBP family. In terms of tissue distribution, in adults, expressed in the gonads, with expression much higher in the ovary than the testis (at protein level). Shows a small amount of expression in other adult organs, including the brain and kidney. Embryonic expression is mostly ubiquitous except in early gastrula embryos where expression is asymmetric.

It is found in the nucleus. Its function is as follows. TATA box-binding transcription factor. Members of the TBP family are differentially required to regulate transcription and development during early embryogenesis. Commits mesoderm to the hematopoietic lineage during hemopoiesis, acting via mespa. Binds to the mespa promoter. The sequence is that of TATA box-binding protein-like 2 from Danio rerio (Zebrafish).